The sequence spans 228 residues: Probable ribosomal RNA small subunit methyltransferase A (228 aa).

Residues His9, Leu11, Gly34, Glu55, Asp78, and Asn93 each contribute to the S-adenosyl-L-methionine site.

Belongs to the class I-like SAM-binding methyltransferase superfamily. rRNA adenine N(6)-methyltransferase family. RsmA subfamily.

It is found in the cytoplasm. Specifically dimethylates two adjacent adenosines in the loop of a conserved hairpin near the 3'-end of 16S rRNA in the 30S particle. May play a critical role in biogenesis of 30S subunits. The sequence is that of Probable ribosomal RNA small subunit methyltransferase A from Pyrobaculum aerophilum (strain ATCC 51768 / DSM 7523 / JCM 9630 / CIP 104966 / NBRC 100827 / IM2).